The chain runs to 582 residues: External alternative NADH-ubiquinone oxidoreductase, mitochondrial (582 aa).

Residues 1–30 (MLRLRPAVRAVSVARSVALTRSLHVSVAKF) constitute a mitochondrion transit peptide. Residues 46–65 (KQTAGHQGHHQEIPKPDENH) form a disordered region. The span at 54 to 65 (HHQEIPKPDENH) shows a compositional bias: basic and acidic residues. FAD is bound at residue 114–144 (TLVVLGSGWGSVSFLKKLDTSNYNVIVVSPR). Residue 277 to 313 (LHTVVVGGGPTGVEFAAELQDFFEDDLRKWIPDIRDD) coordinates NAD(+). Residues 454-501 (LLNGIAKTEDLNNEITNLEKQSEHTFDEQERKNIFAQLESKSRKLRRS) adopt a coiled-coil conformation.

The protein belongs to the NADH dehydrogenase family. The cofactor is FAD.

The protein resides in the mitochondrion inner membrane. It catalyses the reaction a quinone + NADH + H(+) = a quinol + NAD(+). The enzyme catalyses a ubiquinone + NADH + H(+) = a ubiquinol + NAD(+). In terms of biological role, alternative NADH-ubiquinone oxidoreductase which catalyzes the oxidation of mitochondrial NADH does not translocate protons across the inner mitochondrial membrane. The chain is External alternative NADH-ubiquinone oxidoreductase, mitochondrial (NDH2) from Yarrowia lipolytica (strain CLIB 122 / E 150) (Yeast).